Consider the following 338-residue polypeptide: uncharacterized protein (338 aa).

Positions 1-20 (MYNNNQNHHNNDNNMNKDEP) are disordered. A compositionally biased stretch (basic and acidic residues) spans 9-20 (HNNDNNMNKDEP). Asn37, Asn83, Asn97, Asn105, Asn114, and Asn122 each carry an N-linked (GlcNAc...) asparagine glycan. The tract at residues 55-92 (VNSGNNNNNNNNNNNNNNNNNNNNNNNNNDSIVINMDT) is disordered. Low complexity predominate over residues 59–92 (NNNNNNNNNNNNNNNNNNNNNNNNNDSIVINMDT). The next 3 membrane-spanning stretches (helical) occupy residues 148–168 (YKKF…IVLI), 178–198 (FHAY…FLLI), and 202–222 (ILSI…FLKV). Residues Asn229, Asn240, Asn286, Asn302, Asn317, and Asn322 are each glycosylated (N-linked (GlcNAc...) asparagine). Disordered stretches follow at residues 279 to 303 (SNLN…NSNS) and 316 to 338 (LNSS…TNEE). Low complexity predominate over residues 280–294 (NLNRNNNNSNNVNNN). Over residues 316–327 (LNSSGSNSSIYS) the composition is skewed to low complexity. A compositionally biased stretch (polar residues) spans 328–338 (DVQNDIGTNEE).

It localises to the membrane. This is an uncharacterized protein from Dictyostelium discoideum (Social amoeba).